The following is a 117-amino-acid chain: MLNELSTRKCTPCQGGMPALDRSEAERYLSQAPGWSLADNGSRIERHYSFRDYRSALRFVVDLSQLAEDEGHHPDISFGWGHATVSWQTKKIKGLHENDFIMAAKTDQIAGDGNGSA.

The protein belongs to the pterin-4-alpha-carbinolamine dehydratase family.

It carries out the reaction (4aS,6R)-4a-hydroxy-L-erythro-5,6,7,8-tetrahydrobiopterin = (6R)-L-erythro-6,7-dihydrobiopterin + H2O. This Azoarcus sp. (strain BH72) protein is Putative pterin-4-alpha-carbinolamine dehydratase.